Consider the following 472-residue polypeptide: Sporozoite surface protein P36p (472 aa).

Residues 1–23 form the signal peptide; the sequence is MMKRRRIFMYYCFCFLLKYVAFS. N-linked (GlcNAc...) asparagine glycans are attached at residues Asn-24, Asn-29, Asn-93, Asn-112, and Asn-185. 6-Cys domains are found at residues 24–157 and 160–299; these read NVTN…FKKM and KIKG…TSKN. Disulfide bonds link Cys-64/Cys-138, Cys-81/Cys-136, Cys-164/Cys-188, Cys-202/Cys-281, and Cys-222/Cys-279. 6 N-linked (GlcNAc...) asparagine glycosylation sites follow: Asn-295, Asn-306, Asn-383, Asn-396, Asn-400, and Asn-416. The tract at residues 359 to 385 is disordered; that stretch reads KMDPSDEDESNENAHNGNRANKDANYS. Ser-449 is lipidated: GPI-anchor amidated serine. Residues 450 to 472 constitute a propeptide, removed in mature form; the sequence is SSYYEVFNYFSIAFILIIHMLLW.

The protein resides in the cell surface. The protein localises to the cell membrane. Functionally, involved in sporozoite infection of hepatocytes and replication therein. The polypeptide is Sporozoite surface protein P36p (P52) (Plasmodium berghei (strain Anka)).